Consider the following 623-residue polypeptide: MDPEQTFIRVQERFSQILTPRIRGFLEYTYLFVAITLFCILVVMHANYVQQPGCSSELTGVELAEAELMQIKITSAGLWSRNDESTAADVPRVVAATDSLEVSKTDQESSTSEENTDDTFVKIDKEEPRSSFSVSAKENVRAAILRFLKKCYRRISFVLQHTARILRGVRKIWNIIGIPLNLDVPKLLHVLYMDKVNYYAVQWLESKTQEFEPTYLYTMEKGYFLLPDEAKSRHNIRTANVSISARHPCFGNRWQQLLINRVVGYDTIIMNSLQNSAGQGYLYNYQTREFYNLSYSQELPDGSAHFGDYLVTKCGVLMMSLFVFFTTTMSVSFTLRETQTRMLKFTVQLQHHAQHRLPTFQLIFVHVIESLVFVPIMIGILFFLFEFYDDQLLAFMVLVLVWLCELFTLISVRTPISMKFFPRFFLLYFLVFHIYFFSYAYGFSYLALMTTAAFMQHLILYFWNRFEVPALQRFLQSRQSHLQQHPDFHITSSTILASTLHITRLNRTTRNRTPSGPNHTTPNQNTETRSFTADGGGVGNPAQYQEQQEENEANTVPAEPNPQQAGAMSSFSSMLLWILGGASSEGLNSFLSMFRDVRDEDEAQVFADTSPPQNPHHDPLSVD.

The chain crosses the membrane as a helical span at residues 24 to 44 (GFLEYTYLFVAITLFCILVVM). The interval 99–119 (SLEVSKTDQESSTSEENTDDT) is disordered. The next 4 membrane-spanning stretches (helical) occupy residues 315–335 (GVLM…SFTL), 363–383 (IFVH…ILFF), 392–412 (LLAF…LISV), and 424–444 (FFLL…YGFS). Disordered stretches follow at residues 506 to 567 (NRTT…QAGA) and 602 to 623 (EAQV…LSVD). The span at 514 to 531 (PSGPNHTTPNQNTETRSF) shows a compositional bias: polar residues.

This sequence belongs to the membralin family.

The protein resides in the membrane. This Arabidopsis thaliana (Mouse-ear cress) protein is Membralin-like protein At1g60995.